Consider the following 307-residue polypeptide: Protoheme IX farnesyltransferase (307 aa).

9 helical membrane-spanning segments follow: residues 31 to 51 (VTQLAVFCAIIGMFLATPGMV), 53 to 73 (WPVLIGGAAGIWLLAGAAFAI), 103 to 123 (TLVFSAILGGAGMWLLHVYAN), 125 to 145 (LTMWLTFATFLGYAVVYTILL), 153 to 173 (IVIGGLSGAMPPALGWAAVAG), 179 to 199 (AWFLVLIIFTWTPPHFWALAL), 223 to 243 (LLHILLYTLIMIAATLLPFVY), 246 to 266 (SGYIYLAAALALGAGFLAYAW), and 285 to 305 (ILYLSLLFAALLVDHYFKFVP).

It belongs to the UbiA prenyltransferase family. Protoheme IX farnesyltransferase subfamily.

It localises to the cell inner membrane. The enzyme catalyses heme b + (2E,6E)-farnesyl diphosphate + H2O = Fe(II)-heme o + diphosphate. The protein operates within porphyrin-containing compound metabolism; heme O biosynthesis; heme O from protoheme: step 1/1. Converts heme B (protoheme IX) to heme O by substitution of the vinyl group on carbon 2 of heme B porphyrin ring with a hydroxyethyl farnesyl side group. This chain is Protoheme IX farnesyltransferase, found in Cupriavidus taiwanensis (strain DSM 17343 / BCRC 17206 / CCUG 44338 / CIP 107171 / LMG 19424 / R1) (Ralstonia taiwanensis (strain LMG 19424)).